The sequence spans 245 residues: MTLTASSSSRAVTNSPVVVALDYHNRDDALSFVDKIDPRDCRLKVGKEMFTLFGPQFVRELQQRGFDIFLDLKFHDIPNTAAHAVAAAADLGVWMVNVHASGGARMMTAAREALVPYGKDAPLLIAVTVLTSMEASDLADLGVTLSPADYAERLAALTQKCGFDGVVCSAQEAVRFKQVFGQEFKLVTPGIRPQGSDAGDQRRIMTPEQALAAGVDYMVIGRPVTQSVDPAQTLKAINASLQRSA.

Substrate-binding positions include D22, K44, D71–T80, T131, R192, Q201, G221, and R222. Residue K73 is the Proton donor of the active site.

The protein belongs to the OMP decarboxylase family. Type 1 subfamily. Homodimer.

It carries out the reaction orotidine 5'-phosphate + H(+) = UMP + CO2. It participates in pyrimidine metabolism; UMP biosynthesis via de novo pathway; UMP from orotate: step 2/2. Its function is as follows. Catalyzes the decarboxylation of orotidine 5'-monophosphate (OMP) to uridine 5'-monophosphate (UMP). This chain is Orotidine 5'-phosphate decarboxylase, found in Shigella dysenteriae serotype 1 (strain Sd197).